The primary structure comprises 412 residues: Translation initiation factor 2 subunit gamma (412 aa).

A tr-type G domain is found at 7–203 (QPEVNIGLVG…AIESEIPTPD (197 aa)). Residues 16–23 (GHVDHGKT) are G1. Aspartate 19, threonine 23, glycine 44, and serine 46 together coordinate Mg(2+). 19–24 (DHGKTT) serves as a coordination point for GTP. A G2 region spans residues 44-48 (GISIR). The interval 90–93 (DAPG) is G3. GTP-binding positions include 146–149 (NKVD) and 181–183 (SAQ). The tract at residues 146-149 (NKVD) is G4. The G5 stretch occupies residues 181–183 (SAQ).

Belongs to the TRAFAC class translation factor GTPase superfamily. Classic translation factor GTPase family. EIF2G subfamily. In terms of assembly, heterotrimer composed of an alpha, a beta and a gamma chain. Mg(2+) is required as a cofactor.

The catalysed reaction is GTP + H2O = GDP + phosphate + H(+). Functionally, eIF-2 functions in the early steps of protein synthesis by forming a ternary complex with GTP and initiator tRNA. This chain is Translation initiation factor 2 subunit gamma, found in Halorubrum lacusprofundi (strain ATCC 49239 / DSM 5036 / JCM 8891 / ACAM 34).